Here is a 108-residue protein sequence, read N- to C-terminus: MADPRVRQIKIKTGVVKRLVKEKVMYEKEAKQQEEKIEKMRAEDGENYDIKKQAEILQESRMMIPDCQRRLEAAYLDLQRILENEKDLEEAEEYKEARLVLDSVKLEA.

Residue Ala2 is modified to N-acetylalanine.

The protein belongs to the TBCA family. As to quaternary structure, supercomplex made of cofactors A to E. Cofactors A and D function by capturing and stabilizing tubulin in a quasi-native conformation. Cofactor E binds to the cofactor D-tubulin complex; interaction with cofactor C then causes the release of tubulin polypeptides that are committed to the native state.

It localises to the cytoplasm. It is found in the cytoskeleton. Its function is as follows. Tubulin-folding protein; involved in the early step of the tubulin folding pathway. The protein is Tubulin-specific chaperone A (TBCA) of Homo sapiens (Human).